Reading from the N-terminus, the 192-residue chain is uncharacterized protein (192 aa).

Residues 7 to 29 form a helical; Signal-anchor membrane-spanning segment; that stretch reads FIHSISGGSSLLSASEVFASAFF. Residues 51-67 traverse the membrane as a helical segment; sequence YFLCVLVSTFLNSLVII.

It is found in the membrane. This is an uncharacterized protein from Saccharomyces cerevisiae (strain ATCC 204508 / S288c) (Baker's yeast).